A 469-amino-acid polypeptide reads, in one-letter code: Light-independent protochlorophyllide reductase subunit N (469 aa).

Residues Cys-24, Cys-49, and Cys-109 each coordinate [4Fe-4S] cluster.

This sequence belongs to the BchN/ChlN family. Protochlorophyllide reductase is composed of three subunits; ChlL, ChlN and ChlB. Forms a heterotetramer of two ChlB and two ChlN subunits. [4Fe-4S] cluster serves as cofactor.

The catalysed reaction is chlorophyllide a + oxidized 2[4Fe-4S]-[ferredoxin] + 2 ADP + 2 phosphate = protochlorophyllide a + reduced 2[4Fe-4S]-[ferredoxin] + 2 ATP + 2 H2O. The protein operates within porphyrin-containing compound metabolism; chlorophyll biosynthesis (light-independent). Component of the dark-operative protochlorophyllide reductase (DPOR) that uses Mg-ATP and reduced ferredoxin to reduce ring D of protochlorophyllide (Pchlide) to form chlorophyllide a (Chlide). This reaction is light-independent. The NB-protein (ChlN-ChlB) is the catalytic component of the complex. The chain is Light-independent protochlorophyllide reductase subunit N from Synechocystis sp. (strain ATCC 27184 / PCC 6803 / Kazusa).